The sequence spans 237 residues: Ribonuclease PH (237 aa).

Phosphate is bound by residues R86 and 124-126; that span reads GTR.

The protein belongs to the RNase PH family. Homohexameric ring arranged as a trimer of dimers.

The catalysed reaction is tRNA(n+1) + phosphate = tRNA(n) + a ribonucleoside 5'-diphosphate. In terms of biological role, phosphorolytic 3'-5' exoribonuclease that plays an important role in tRNA 3'-end maturation. Removes nucleotide residues following the 3'-CCA terminus of tRNAs; can also add nucleotides to the ends of RNA molecules by using nucleoside diphosphates as substrates, but this may not be physiologically important. Probably plays a role in initiation of 16S rRNA degradation (leading to ribosome degradation) during starvation. This chain is Ribonuclease PH, found in Coxiella burnetii (strain RSA 331 / Henzerling II).